A 116-amino-acid polypeptide reads, in one-letter code: NADH-ubiquinone oxidoreductase chain 3 (116 aa).

A run of 3 helical transmembrane segments spans residues 4–24 (LIITLITNSLLSTIIIIIAFW), 56–76 (FFLVAITFLLFDLEIALLLPL), and 88–108 (TLILSYCLIMLLTVGLAYEWI).

The protein belongs to the complex I subunit 3 family. In terms of assembly, core subunit of respiratory chain NADH dehydrogenase (Complex I) which is composed of 45 different subunits. Interacts with TMEM186. Interacts with TMEM242.

Its subcellular location is the mitochondrion inner membrane. It carries out the reaction a ubiquinone + NADH + 5 H(+)(in) = a ubiquinol + NAD(+) + 4 H(+)(out). In terms of biological role, core subunit of the mitochondrial membrane respiratory chain NADH dehydrogenase (Complex I) which catalyzes electron transfer from NADH through the respiratory chain, using ubiquinone as an electron acceptor. Essential for the catalytic activity of complex I. The protein is NADH-ubiquinone oxidoreductase chain 3 of Didelphis virginiana (North American opossum).